The following is a 353-amino-acid chain: Glycerol-3-phosphate dehydrogenase [NAD(+)], cytoplasmic (353 aa).

Blocked amino end (Ala) is present on Ala2. Residues 11 to 16, Phe98, Lys121, and Ala155 each bind NAD(+); that span reads GSGNWG. Lys121 contacts substrate. The active-site Proton acceptor is the Lys206. The NAD(+) site is built by Arg270 and Gln299. Substrate is bound at residue 270–271; sequence RN.

It belongs to the NAD-dependent glycerol-3-phosphate dehydrogenase family. Homodimer.

The protein localises to the cytoplasm. The catalysed reaction is sn-glycerol 3-phosphate + NAD(+) = dihydroxyacetone phosphate + NADH + H(+). It functions in the pathway phospholipid metabolism; alpha-glycerophosphate cycle. In Drosophila virilis (Fruit fly), this protein is Glycerol-3-phosphate dehydrogenase [NAD(+)], cytoplasmic.